The following is a 557-amino-acid chain: Myo-inositol transporter 2 (557 aa).

Topologically, residues 1–76 are cytoplasmic; it reads MDFNNIPLAT…ENGEGFEAEK (76 aa). The tract at residues 24–69 is disordered; the sequence is EMTTRPSETKKKVPFSEDMREIPSLPNEEEANATDPQANEVADENG. The span at 30-44 shows a compositional bias: basic and acidic residues; sequence SETKKKVPFSEDMRE. Residues 77–97 traverse the membrane as a helical segment; sequence ISSWIWVLSAVAGISGLLFGY. Residues 98–99 lie on the Extracellular side of the membrane; that stretch reads DT. A helical transmembrane segment spans residues 100 to 120; that stretch reads GVISGALAVLGSDLGHVLSSG. Residues 121-123 are Cytoplasmic-facing; that stretch reads QKE. The chain crosses the membrane as a helical span at residues 124–144; that stretch reads LITSATSFAALISATTSGWLA. The Extracellular portion of the chain corresponds to 145–157; sequence DWVGRKRLLLCAD. A helical transmembrane segment spans residues 158 to 178; the sequence is AIFVIGSVIMAASRNVAMMVV. The Cytoplasmic segment spans residues 179–180; sequence GR. Residues 181-201 traverse the membrane as a helical segment; the sequence is FIVGYGIGLTSLIVPMYITEL. Topologically, residues 202 to 209 are extracellular; it reads APARLRGR. Residues 210-230 form a helical membrane-spanning segment; it reads LVIIYVVFITGGQLIAYSLNA. Residues 231-240 are Cytoplasmic-facing; it reads AFEHVHQGWR. Residues 241–261 traverse the membrane as a helical segment; the sequence is IMFGIGAAPALGQLISLFWTP. The Extracellular portion of the chain corresponds to 262 to 367; that stretch reads ESPRYLLRHN…IFQSVGFKNS (106 aa). The chain crosses the membrane as a helical span at residues 368–388; sequence ISVSIVVGATNFVFTIVAFMF. Residues 389 to 396 are Cytoplasmic-facing; sequence IDRIGRRR. The chain crosses the membrane as a helical span at residues 397 to 417; that stretch reads ILLCTSAVMIAGLALCAIAYH. Over 418-432 the chain is Extracellular; sequence FLPADTTQNTNSGWQ. The chain crosses the membrane as a helical span at residues 433–453; that stretch reads YVVLASIIIFLASYASGIGNI. Residues 454 to 468 are Cytoplasmic-facing; the sequence is PWQQAELFPMEVRAL. A helical membrane pass occupies residues 469 to 489; sequence GAGFSTAINWVGNLIISASFL. At 490–498 the chain is on the extracellular side; it reads TMMESITPT. The helical transmembrane segment at 499-519 threads the bilayer; that stretch reads GTFALFAGFCFVGLVTSYFTY. The Cytoplasmic segment spans residues 520-557; that stretch reads PELAGMSIENIHKLLEKGFWQAVKESTKRVRKGRIDEA.

This sequence belongs to the major facilitator superfamily. Sugar transporter (TC 2.A.1.1) family.

The protein localises to the membrane. The catalysed reaction is myo-inositol(out) + H(+)(out) = myo-inositol(in) + H(+)(in). Its function is as follows. Transporter for myo-inositol. This Schizosaccharomyces pombe (strain 972 / ATCC 24843) (Fission yeast) protein is Myo-inositol transporter 2 (itr2).